The following is a 293-amino-acid chain: Amine sulfotransferase (293 aa).

Lysine 46 to tryptophan 51 contacts 3'-phosphoadenylyl sulfate. The active-site Proton acceptor is histidine 101. Residues arginine 123, serine 131, alanine 220 to methionine 225, and arginine 252 to glycine 254 contribute to the 3'-phosphoadenylyl sulfate site.

The protein belongs to the sulfotransferase 1 family.

It localises to the cytoplasm. The catalysed reaction is a primary amine + 3'-phosphoadenylyl sulfate = a sulfamate + adenosine 3',5'-bisphosphate + 2 H(+). Its function is as follows. Sulfotransferase that utilizes 3'-phospho-5'-adenylyl sulfate (PAPS) as sulfonate donor to catalyze the N-sulfonation of amines. The sequence is that of Amine sulfotransferase (Sult3a1) from Mus musculus (Mouse).